Reading from the N-terminus, the 315-residue chain is PDZ domain-containing protein GIPC2 (315 aa).

Residues 1–12 (MPLKLRGKKKAK) show a composition bias toward basic residues. A disordered region spans residues 1-34 (MPLKLRGKKKAKSKETAGLVEGEPTGAGGGSLSA). Residues 117–197 (EVNVYKSEDS…EELFTMKLIE (81 aa)) form the PDZ domain.

It belongs to the GIPC family. Probably interacts with SEMA5A. Expressed at highest levels in ascending colon and at moderate levels in adult kidney. Expressed at low levels in adult pancreas and at very low levels in adult liver. Expression is down-regulated in several primary tumors, such as kidney, colon and rectal tumors.

Its subcellular location is the cytoplasm. The chain is PDZ domain-containing protein GIPC2 (GIPC2) from Homo sapiens (Human).